Reading from the N-terminus, the 178-residue chain is Bryoporin (178 aa).

Residues Ser-51, Val-83, Ser-102, Pro-104, and Tyr-134 each coordinate phosphocholine. Residues 101-117 are trp-rich region; that stretch reads WSVPFDYNLYSNWWNIA.

The protein belongs to the actinoporin family. Plant subfamily.

Inhibited by sphingomyelin. Its function is as follows. Actinoporin-related protein having hemolytic activity in vitro. Binds probably a phosphocholine derivative with the unique amido or hydroxyl groups found in sphingomyelin. Involved in drought tolerance. The chain is Bryoporin from Physcomitrium patens (Spreading-leaved earth moss).